The following is a 789-amino-acid chain: Disintegrin and metalloproteinase domain-containing protein 1 (789 aa).

The first 68 residues, 1 to 68 (MSVAASASRS…LLIFLPSTLC (68 aa)), serve as a signal peptide directing secretion. Residues 238–432 (KYVEMFVVVN…HRGACLLDRP (195 aa)) form the Peptidase M12B domain. A glycan (N-linked (GlcNAc...) asparagine) is linked at asparagine 259. 4 disulfides stabilise this stretch: cysteine 348-cysteine 427, cysteine 388-cysteine 411, cysteine 390-cysteine 396, and cysteine 497-cysteine 517. A Zn(2+)-binding site is contributed by histidine 373. Glutamate 374 is an active-site residue. Zn(2+) contacts are provided by histidine 377 and histidine 383. Asparagine 410 carries an N-linked (GlcNAc...) asparagine glycan. The region spanning 441 to 525 (DAHCGNGVVE…ECPANSYMQD (85 aa)) is the Disintegrin domain. An N-linked (GlcNAc...) asparagine glycan is attached at asparagine 633. An EGF-like domain is found at 666–700 (LQYDCHPQEMCHGNGVCNNFKHCHCDAGFSPPDCS). Intrachain disulfides connect cysteine 670-cysteine 682, cysteine 676-cysteine 688, and cysteine 690-cysteine 699. Residue asparagine 720 is glycosylated (N-linked (GlcNAc...) asparagine). Residues 743–763 (VVVLVVPIFLIVLLCCLMLIA) form a helical membrane-spanning segment. Residues 764–789 (YLWSEVQEAVSPGSSSTTSSSESESD) lie on the Cytoplasmic side of the membrane.

As to quaternary structure, heterodimer with ADAM2/fertilin subunit beta.

The protein localises to the membrane. Functionally, may be involved in sperm-egg fusion. In Rattus norvegicus (Rat), this protein is Disintegrin and metalloproteinase domain-containing protein 1 (Adam1).